Here is a 109-residue protein sequence, read N- to C-terminus: MKKLKLNKIINENTQDCFFHADPQGRVYIGKGLKGGITITIYDPSGDVRDFRVKEQISYSDILLFQQCADGYVFVYYESYEPKVKVFSEEGRVKSVFHLPSGVSCCLLD.

This is an uncharacterized protein from Bacillus subtilis (strain 168).